The primary structure comprises 245 residues: 1-(5-phosphoribosyl)-5-[(5-phosphoribosylamino)methylideneamino] imidazole-4-carboxamide isomerase (245 aa).

Catalysis depends on aspartate 7, which acts as the Proton acceptor. Residue aspartate 129 is the Proton donor of the active site.

The protein belongs to the HisA/HisF family.

It localises to the cytoplasm. The catalysed reaction is 1-(5-phospho-beta-D-ribosyl)-5-[(5-phospho-beta-D-ribosylamino)methylideneamino]imidazole-4-carboxamide = 5-[(5-phospho-1-deoxy-D-ribulos-1-ylimino)methylamino]-1-(5-phospho-beta-D-ribosyl)imidazole-4-carboxamide. Its pathway is amino-acid biosynthesis; L-histidine biosynthesis; L-histidine from 5-phospho-alpha-D-ribose 1-diphosphate: step 4/9. The protein is 1-(5-phosphoribosyl)-5-[(5-phosphoribosylamino)methylideneamino] imidazole-4-carboxamide isomerase of Pectobacterium carotovorum subsp. carotovorum (strain PC1).